The chain runs to 349 residues: Ornithine carbamoyltransferase, mitochondrial (349 aa).

Carbamoyl phosphate-binding positions include 73-76 (STRT), Arg-124, His-151, and Gln-154. Residues Asn-195, Asp-261, Ser-265, and Met-266 each contribute to the L-ornithine site. The active-site Proton acceptor is the Cys-303. Residues 303-304 (CL) and Arg-330 each bind carbamoyl phosphate.

The protein belongs to the aspartate/ornithine carbamoyltransferase superfamily. OTCase family. Homotrimer.

It is found in the mitochondrion matrix. The enzyme catalyses carbamoyl phosphate + L-ornithine = L-citrulline + phosphate + H(+). Its pathway is amino-acid biosynthesis; L-arginine biosynthesis; L-arginine from L-ornithine and carbamoyl phosphate: step 1/3. In Coccidioides immitis (strain RS) (Valley fever fungus), this protein is Ornithine carbamoyltransferase, mitochondrial.